We begin with the raw amino-acid sequence, 262 residues long: Octanoyltransferase (262 aa).

A BPL/LPL catalytic domain is found at 60–248 (GTADELVWLV…AFEMVFGPTR (189 aa)). Residues 99–106 (RGGEYTYH), 179–181 (AIG), and 192–194 (GLS) contribute to the substrate site. Cysteine 210 functions as the Acyl-thioester intermediate in the catalytic mechanism.

The protein belongs to the LipB family.

The protein localises to the cytoplasm. It catalyses the reaction octanoyl-[ACP] + L-lysyl-[protein] = N(6)-octanoyl-L-lysyl-[protein] + holo-[ACP] + H(+). It functions in the pathway protein modification; protein lipoylation via endogenous pathway; protein N(6)-(lipoyl)lysine from octanoyl-[acyl-carrier-protein]: step 1/2. Its function is as follows. Catalyzes the transfer of endogenously produced octanoic acid from octanoyl-acyl-carrier-protein onto the lipoyl domains of lipoate-dependent enzymes. Lipoyl-ACP can also act as a substrate although octanoyl-ACP is likely to be the physiological substrate. The chain is Octanoyltransferase from Sinorhizobium medicae (strain WSM419) (Ensifer medicae).